Reading from the N-terminus, the 180-residue chain is Thiol:disulfide interchange protein TxlA homolog (180 aa).

A helical transmembrane segment spans residues 10–26; it reads LLAVVAIALSAAVYLGF. The Thioredoxin domain occupies 34 to 143; sequence SLEAQAQRAI…LEQNITALVA (110 aa). A disulfide bridge connects residues Cys64 and Cys67.

This sequence belongs to the thioredoxin family.

The protein resides in the cell membrane. Functionally, required for disulfide bond formation in some proteins. Acts by transferring its disulfide bond to other proteins and is reduced in the process. The protein is Thiol:disulfide interchange protein TxlA homolog (txlA) of Synechocystis sp. (strain ATCC 27184 / PCC 6803 / Kazusa).